We begin with the raw amino-acid sequence, 700 residues long: Long chain acyl-CoA synthetase 7, peroxisomal (700 aa).

A disordered region spans residues 1–29 (MEFASPEQRRLETIRSHIDTSPTNDQSSS). The span at 7–18 (EQRRLETIRSHI) shows a compositional bias: basic and acidic residues. Positions 10 to 18 (RLETIRSHI) match the Microbody targeting signal motif. The segment covering 19–29 (DTSPTNDQSSS) has biased composition (polar residues). 266 to 277 (ICYTSGTTGTPK) lines the ATP pocket. The fatty acid-binding stretch occupies residues 526-550 (DGWLHTGDIGLWLPGGRLKIIDRKK). Positions 698-700 (SKL) match the Microbody targeting signal motif.

Belongs to the ATP-dependent AMP-binding enzyme family. As to quaternary structure, interacts with PEX5. Mg(2+) serves as cofactor. As to expression, expressed in roots, stems, leaves flowers and germinating seedling. Preferentially expressed in seeds.

Its subcellular location is the peroxisome. It carries out the reaction a long-chain fatty acid + ATP + CoA = a long-chain fatty acyl-CoA + AMP + diphosphate. The catalysed reaction is decanoate + ATP + CoA = decanoyl-CoA + AMP + diphosphate. It catalyses the reaction dodecanoate + ATP + CoA = dodecanoyl-CoA + AMP + diphosphate. The enzyme catalyses tetradecanoate + ATP + CoA = tetradecanoyl-CoA + AMP + diphosphate. It carries out the reaction hexadecanoate + ATP + CoA = hexadecanoyl-CoA + AMP + diphosphate. The catalysed reaction is (9Z)-octadecenoate + ATP + CoA = (9Z)-octadecenoyl-CoA + AMP + diphosphate. It catalyses the reaction (9Z,12Z)-octadecadienoate + ATP + CoA = (9Z,12Z)-octadecadienoyl-CoA + AMP + diphosphate. The enzyme catalyses (9Z,12Z,15Z)-octadecatrienoate + ATP + CoA = (9Z,12Z,15Z)-octadecatrienoyl-CoA + AMP + diphosphate. Its pathway is lipid metabolism; fatty acid metabolism. Its function is as follows. Activation of long-chain fatty acids for both synthesis of cellular lipids, and degradation via beta-oxidation. Preferentially uses palmitate, palmitoleate, oleate, linoleate and eicosenoate as substrates. Can use myristate and linolenate as substrates. Functions redundantly with LACS6 in lipid mobilization for beta-oxidation during seed germination, which is essential for postgerminative growth and seedling establishment. The protein is Long chain acyl-CoA synthetase 7, peroxisomal of Arabidopsis thaliana (Mouse-ear cress).